The primary structure comprises 403 residues: Coiled-coil domain-containing glutamate-rich protein 1 (403 aa).

Positions 1-11 (MTQTVNEREDP) are enriched in basic and acidic residues. 5 disordered regions span residues 1-23 (MTQT…ASSI), 51-70 (IEYE…GSWF), 134-164 (RPPG…PPID), 202-241 (QQEK…VEED), and 261-350 (PALM…GEQR). The span at 137–157 (GRKKRWGRRGRGLRRHPRRSF) shows a compositional bias: basic residues. Residues 209–220 (QQAALRAQQAQE) are compositionally biased toward low complexity. Residues 261-271 (PALMQHNQSPT) show a composition bias toward polar residues. Positions 275 to 346 (VEEEEKNVDD…YMLEETGLEE (72 aa)) are enriched in acidic residues. The stretch at 292 to 353 (CDEKEESEEE…LEEGEQRAEE (62 aa)) forms a coiled coil.

As to expression, expressed in testis.

The protein resides in the nucleus. Regulator of histone epigenetic modifications and chromatin compaction into the sperm head, required for histone-to-protamine (HTP) transition. HTP is a key event in which somatic histones are first replaced by testis-specific histone variants, then transition proteins (TNPs) are incorporated into the spermatid nucleus, and finally protamines (PRMs) replace the TNPs to promote chromatin condensation. This Mus musculus (Mouse) protein is Coiled-coil domain-containing glutamate-rich protein 1 (Ccer1).